Here is a 123-residue protein sequence, read N- to C-terminus: Large ribosomal subunit protein bL12 (123 aa).

This sequence belongs to the bacterial ribosomal protein bL12 family. As to quaternary structure, homodimer. Part of the ribosomal stalk of the 50S ribosomal subunit. Forms a multimeric L10(L12)X complex, where L10 forms an elongated spine to which 2 to 4 L12 dimers bind in a sequential fashion. Binds GTP-bound translation factors.

Its function is as follows. Forms part of the ribosomal stalk which helps the ribosome interact with GTP-bound translation factors. Is thus essential for accurate translation. This Geobacillus thermodenitrificans (strain NG80-2) protein is Large ribosomal subunit protein bL12.